A 215-amino-acid chain; its full sequence is Cytochrome b-c1 complex subunit Rieske, mitochondrial (215 aa).

A mitochondrion-targeting transit peptide spans 1-22 (MLGIRSSVKTCFKPMSLTSKRL). A propeptide spans 23-30 (ISQSLLAS) (removed in mature form). Residues 31–50 (KSTYRTPNFDDVLKENNDAD) are Mitochondrial matrix-facing. Residues 51-80 (KGRSYAYFMVGAMGLLSSAGAKSTVETFIS) form a helical membrane-spanning segment. Over 81-215 (SMTATADVLA…EFDGDKVIVG (135 aa)) the chain is Mitochondrial intermembrane. A hinge region spans residues 90-93 (AMAK). Positions 123 to 214 (PHEIQEANSV…YEFDGDKVIV (92 aa)) constitute a Rieske domain. The [2Fe-2S] cluster site is built by Cys-159, His-161, Cys-178, and His-181. Cysteines 164 and 180 form a disulfide.

The protein belongs to the Rieske iron-sulfur protein family. As to quaternary structure, component of the ubiquinol-cytochrome c oxidoreductase (cytochrome b-c1 complex, complex III, CIII), a multisubunit enzyme composed of 10 subunits. The complex is composed of 3 respiratory subunits cytochrome b (COB), cytochrome c1 (CYT1) and Rieske protein (RIP1), 2 core protein subunits COR1 and QCR2, and 5 low-molecular weight protein subunits QCR6, QCR7, QCR8, QCR9 and QCR10. The complex exists as an obligatory dimer and forms supercomplexes (SCs) in the inner mitochondrial membrane with a monomer or a dimer of cytochrome c oxidase (complex IV, CIV), resulting in 2 different assemblies (supercomplexes III(2)IV and III(2)IV(2)). RIP1 interacts with QCR10 on the intermembrane space (IMS) side, and with QCR9. [2Fe-2S] cluster serves as cofactor. Post-translationally, processed by both the mitochondrial processing peptidase (MPP) and the mitochondrial intermediate protease (MIP). Initially, MPP removes 22 amino acids from the newly imported precursor in the mitochondrial matrix. This proteolytic processing is then followed by a second proteolytic cleavage by MIP, which removes an octapeptide to generate mature-sized RIP1.

The protein resides in the mitochondrion inner membrane. The enzyme catalyses a quinol + 2 Fe(III)-[cytochrome c](out) = a quinone + 2 Fe(II)-[cytochrome c](out) + 2 H(+)(out). In terms of biological role, component of the ubiquinol-cytochrome c oxidoreductase, a multisubunit transmembrane complex that is part of the mitochondrial electron transport chain which drives oxidative phosphorylation. The respiratory chain contains 3 multisubunit complexes succinate dehydrogenase (complex II, CII), ubiquinol-cytochrome c oxidoreductase (cytochrome b-c1 complex, complex III, CIII) and cytochrome c oxidase (complex IV, CIV), that cooperate to transfer electrons derived from NADH and succinate to molecular oxygen, creating an electrochemical gradient over the inner membrane that drives transmembrane transport and the ATP synthase. The cytochrome b-c1 complex catalyzes electron transfer from ubiquinol to cytochrome c, linking this redox reaction to translocation of protons across the mitochondrial inner membrane, with protons being carried across the membrane as hydrogens on the quinol. In the process called Q cycle, 2 protons are consumed from the matrix, 4 protons are released into the intermembrane space and 2 electrons are passed to cytochrome c. The Rieske protein is a catalytic core subunit containing a [2Fe-2S] iron-sulfur cluster. It cycles between 2 conformational states during catalysis to transfer electrons from the quinol bound in the Q(0) site in cytochrome b (COB) to cytochrome c1 (CYT1). The chain is Cytochrome b-c1 complex subunit Rieske, mitochondrial (RIP1) from Saccharomyces cerevisiae (strain ATCC 204508 / S288c) (Baker's yeast).